Here is a 95-residue protein sequence, read N- to C-terminus: Ascorbate-specific PTS system EIIB component (95 aa).

Positions 1–95 (MENKNLHIIA…EIKQALSKVL (95 aa)) constitute a PTS EIIB type-2 domain. The active-site Phosphocysteine intermediate is the Cys-12. The residue at position 12 (Cys-12) is a Phosphocysteine.

Its subcellular location is the cytoplasm. The catalysed reaction is N(pros)-phospho-L-histidyl-[protein] + L-ascorbate(out) = L-ascorbate 6-phosphate(in) + L-histidyl-[protein]. The phosphoenolpyruvate-dependent sugar phosphotransferase system (sugar PTS), a major carbohydrate active transport system, catalyzes the phosphorylation of incoming sugar substrates concomitantly with their translocation across the cell membrane. The enzyme II UlaABC PTS system is involved in ascorbate transport. The protein is Ascorbate-specific PTS system EIIB component (ulaB) of Mycoplasma pneumoniae (strain ATCC 29342 / M129 / Subtype 1) (Mycoplasmoides pneumoniae).